Reading from the N-terminus, the 95-residue chain is Large ribosomal subunit protein uL23 (95 aa).

Belongs to the universal ribosomal protein uL23 family. Part of the 50S ribosomal subunit. Contacts protein L29, and trigger factor when it is bound to the ribosome.

In terms of biological role, one of the early assembly proteins it binds 23S rRNA. One of the proteins that surrounds the polypeptide exit tunnel on the outside of the ribosome. Forms the main docking site for trigger factor binding to the ribosome. The chain is Large ribosomal subunit protein uL23 from Thermodesulfovibrio yellowstonii (strain ATCC 51303 / DSM 11347 / YP87).